The chain runs to 415 residues: Alpha-N-acetylgalactosaminidase (415 aa).

An N-terminal signal peptide occupies residues 1 to 17; the sequence is MLQKTVLLLALVAQVLM. Disulfide bonds link cysteine 38–cysteine 80, cysteine 42–cysteine 49, and cysteine 127–cysteine 158. Substrate is bound by residues 78–79 and lysine 154; that span reads DD. Catalysis depends on aspartate 156, which acts as the Nucleophile. The N-linked (GlcNAc...) asparagine glycan is linked to asparagine 177. Cysteine 187 and cysteine 209 are joined by a disulfide. Serine 188 lines the substrate pocket. Asparagine 201 carries N-linked (GlcNAc...) asparagine glycosylation. 2 residues coordinate substrate: arginine 213 and aspartate 217. The active-site Proton donor is the aspartate 217. The residue at position 322 (serine 322) is a Phosphoserine. Asparagine 330 is a glycosylation site (N-linked (GlcNAc...) asparagine). Serine 332 carries the phosphoserine modification. Asparagine 385 carries N-linked (GlcNAc...) asparagine glycosylation.

The protein belongs to the glycosyl hydrolase 27 family. In terms of assembly, homodimer.

It is found in the lysosome. It carries out the reaction Cleavage of non-reducing alpha-(1-&gt;3)-N-acetylgalactosamine residues from human blood group A and AB mucin glycoproteins, Forssman hapten and blood group A lacto series glycolipids.. The enzyme catalyses a neolactoside IV(3)-alpha-GalNAc,IV(2)-alpha-Fuc-nLc4Cer(d18:1(4E)) + H2O = a neolactoside IV(2)-alpha-Fuc-nLc4Cer(d18:1(4E)) + N-acetyl-alpha-D-galactosamine. It catalyses the reaction a neolactoside IV(3)-alpha-GalNAc,IV(2)-alpha-Fuc-nLc4Cer(d18:0) + H2O = a neolactoside IV(2)-alpha-Fuc-nLc4Cer(d18:0) + N-acetyl-alpha-D-galactosamine. The catalysed reaction is a globoside IV3GalNAc-Gb4Cer + H2O = N-acetyl-alpha-D-galactosamine + a globoside Gb4Cer. In terms of biological role, removes terminal alpha-N-acetylgalactosamine residues from glycolipids and glycopeptides. Required for the breakdown of glycolipids. In Rattus norvegicus (Rat), this protein is Alpha-N-acetylgalactosaminidase (Naga).